Consider the following 751-residue polypeptide: Polyadenylate-binding protein, cytoplasmic and nuclear (751 aa).

2 stretches are compositionally biased toward polar residues: residues 1–26 and 36–50; these read MSAE…NPAA and ESAS…NQPH. A disordered region spans residues 1–50; sequence MSAEVSTTPAADNTVNGTPEATNPAATSAPEVTAVESASPSATPSANQPH. RRM domains lie at 52–130, 140–217, 233–310, and 336–458; these read ASLY…WSQR, GNVF…HHIS, TNVY…RAQK, and VNLY…LAQR. Disordered regions lie at residues 371–413 and 601–643; these read TVTA…KKTE and GQGM…REEV. Residues 379–413 show a composition bias toward basic and acidic residues; that stretch reads ESEKEKESNKENEKEGEEKTEEKPKESEEEAKKTE. Positions 603–629 are enriched in gly residues; sequence GMRGPGYGQGRGGAPVQGGPRPQGGRG. Positions 646–723 constitute a PABC domain; it reads TGGLTAQTLN…ALSVYDEYMK (78 aa). The interval 725-751 is disordered; sequence KGEGEAPAEPAKPKEDAAETATEENKS. Positions 735–751 are enriched in basic and acidic residues; that stretch reads AKPKEDAAETATEENKS.

The protein belongs to the polyadenylate-binding protein type-1 family.

It is found in the cytoplasm. The protein resides in the nucleus. Binds the poly(A) tail of mRNA. Appears to be an important mediator of the multiple roles of the poly(A) tail in mRNA biogenesis, stability and translation. In the nucleus, involved in both mRNA cleavage and polyadenylation. Is also required for efficient mRNA export to the cytoplasm. Acts in concert with a poly(A)-specific nuclease (PAN) to affect poly(A) tail shortening, which may occur concomitantly with either nucleocytoplasmic mRNA transport or translational initiation. In the cytoplasm, stimulates translation initiation and regulates mRNA decay through translation termination-coupled poly(A) shortening, probably mediated by PAN. The protein is Polyadenylate-binding protein, cytoplasmic and nuclear (pab1) of Neosartorya fischeri (strain ATCC 1020 / DSM 3700 / CBS 544.65 / FGSC A1164 / JCM 1740 / NRRL 181 / WB 181) (Aspergillus fischerianus).